The sequence spans 228 residues: Cytochrome c oxidase subunit 2 (228 aa).

Residues 1–26 (MATWNNLNLQNGASPLMEQIIFFHDH) are Mitochondrial intermembrane-facing. A helical membrane pass occupies residues 27-48 (TLIILIMITILVGYLMINLFFN). Residues 49–62 (KYINRFLLEGQMIE) lie on the Mitochondrial matrix side of the membrane. Residues 63–82 (LIWTILPAITLIFIALPSLR) form a helical membrane-spanning segment. Topologically, residues 83-228 (LLYLLDELNN…FIKWINNYSS (146 aa)) are mitochondrial intermembrane. His-161, Cys-196, Glu-198, Cys-200, His-204, and Met-207 together coordinate Cu cation. Glu-198 contributes to the Mg(2+) binding site.

It belongs to the cytochrome c oxidase subunit 2 family. As to quaternary structure, component of the cytochrome c oxidase (complex IV, CIV), a multisubunit enzyme composed of a catalytic core of 3 subunits and several supernumerary subunits. The complex exists as a monomer or a dimer and forms supercomplexes (SCs) in the inner mitochondrial membrane with ubiquinol-cytochrome c oxidoreductase (cytochrome b-c1 complex, complex III, CIII). Cu cation serves as cofactor.

Its subcellular location is the mitochondrion inner membrane. It carries out the reaction 4 Fe(II)-[cytochrome c] + O2 + 8 H(+)(in) = 4 Fe(III)-[cytochrome c] + 2 H2O + 4 H(+)(out). In terms of biological role, component of the cytochrome c oxidase, the last enzyme in the mitochondrial electron transport chain which drives oxidative phosphorylation. The respiratory chain contains 3 multisubunit complexes succinate dehydrogenase (complex II, CII), ubiquinol-cytochrome c oxidoreductase (cytochrome b-c1 complex, complex III, CIII) and cytochrome c oxidase (complex IV, CIV), that cooperate to transfer electrons derived from NADH and succinate to molecular oxygen, creating an electrochemical gradient over the inner membrane that drives transmembrane transport and the ATP synthase. Cytochrome c oxidase is the component of the respiratory chain that catalyzes the reduction of oxygen to water. Electrons originating from reduced cytochrome c in the intermembrane space (IMS) are transferred via the dinuclear copper A center (CU(A)) of subunit 2 and heme A of subunit 1 to the active site in subunit 1, a binuclear center (BNC) formed by heme A3 and copper B (CU(B)). The BNC reduces molecular oxygen to 2 water molecules using 4 electrons from cytochrome c in the IMS and 4 protons from the mitochondrial matrix. The polypeptide is Cytochrome c oxidase subunit 2 (COII) (Yponomeuta malinellus (European small ermine moth)).